Reading from the N-terminus, the 126-residue chain is Phosphoribosyl-AMP cyclohydrolase (126 aa).

Asp-73 contributes to the Mg(2+) binding site. Cys-74 contacts Zn(2+). Mg(2+) contacts are provided by Asp-75 and Asp-77. 2 residues coordinate Zn(2+): Cys-91 and Cys-98.

The protein belongs to the PRA-CH family. In terms of assembly, homodimer. Requires Mg(2+) as cofactor. The cofactor is Zn(2+).

It localises to the cytoplasm. The enzyme catalyses 1-(5-phospho-beta-D-ribosyl)-5'-AMP + H2O = 1-(5-phospho-beta-D-ribosyl)-5-[(5-phospho-beta-D-ribosylamino)methylideneamino]imidazole-4-carboxamide. It functions in the pathway amino-acid biosynthesis; L-histidine biosynthesis; L-histidine from 5-phospho-alpha-D-ribose 1-diphosphate: step 3/9. Functionally, catalyzes the hydrolysis of the adenine ring of phosphoribosyl-AMP. The chain is Phosphoribosyl-AMP cyclohydrolase from Solibacter usitatus (strain Ellin6076).